The following is a 216-amino-acid chain: UPF0301 protein Nham_3550 (216 aa).

A compositionally biased stretch (basic residues) spans 1–10 (MSAARKRPGT). The disordered stretch occupies residues 1–25 (MSAARKRPGTGRRQTDDADTGAPDQ).

It belongs to the UPF0301 (AlgH) family.

The chain is UPF0301 protein Nham_3550 from Nitrobacter hamburgensis (strain DSM 10229 / NCIMB 13809 / X14).